Here is a 79-residue protein sequence, read N- to C-terminus: MDIKAEVIEIIEELFMEDVSDMMDEDLFDAGVLDSMGTVELIVELENRFDIRVPVSEFGRDDWNTANKIVEGVTELRNA.

Positions 1–77 (MDIKAEVIEI…KIVEGVTELR (77 aa)) constitute a Carrier domain. Ser35 is modified (O-(pantetheine 4'-phosphoryl)serine).

This sequence belongs to the DltC family. In terms of processing, 4'-phosphopantetheine is transferred from CoA to a specific serine of apo-DCP.

It localises to the cytoplasm. Its pathway is cell wall biogenesis; lipoteichoic acid biosynthesis. In terms of biological role, carrier protein involved in the D-alanylation of lipoteichoic acid (LTA). The loading of thioester-linked D-alanine onto DltC is catalyzed by D-alanine--D-alanyl carrier protein ligase DltA. The DltC-carried D-alanyl group is further transferred to cell membrane phosphatidylglycerol (PG) by forming an ester bond, probably catalyzed by DltD. D-alanylation of LTA plays an important role in modulating the properties of the cell wall in Gram-positive bacteria, influencing the net charge of the cell wall. The sequence is that of D-alanyl carrier protein from Streptococcus sanguinis (strain SK36).